The chain runs to 833 residues: Probable glucan 1,3-beta-glucosidase D (833 aa).

Residues 1–33 (MPTHSRSRDRYGGRDSDREARYDYDYARRRYAT) show a composition bias toward basic and acidic residues. Positions 1–228 (MPTHSRSRDR…RKRQKKLAVV (228 aa)) are disordered. Residues 1-305 (MPTHSRSRDR…GGRPFWKRKR (305 aa)) are Cytoplasmic-facing. A compositionally biased stretch (acidic residues) spans 34 to 45 (DDDDDYDDDELE). 2 stretches are compositionally biased toward basic and acidic residues: residues 46–75 (HDLT…RDAE) and 97–172 (YGDD…ETAA). Positions 183–196 (SASHLLSADALAKL) are enriched in low complexity. Residues 200–217 (YEKEERRKREIAKDAAKA) show a composition bias toward basic and acidic residues. The chain crosses the membrane as a helical; Signal-anchor for type II membrane protein span at residues 306–326 (WIGLGALIIILVIVIPVAVVV). Residues 327–833 (SKKHDNKSDP…PDFGDLPEYY (507 aa)) are Extracellular-facing. The interval 331-353 (DNKSDPADSQGTSPGKSNLDGLS) is disordered. Asn-332 is a glycosylation site (N-linked (GlcNAc...) asparagine). Over residues 337–346 (ADSQGTSPGK) the composition is skewed to polar residues. N-linked (GlcNAc...) asparagine glycans are attached at residues Asn-378, Asn-383, Asn-395, Asn-548, Asn-560, and Asn-569. The active-site Proton donor is the Glu-599. Asn-638, Asn-671, and Asn-691 each carry an N-linked (GlcNAc...) asparagine glycan. Glu-704 (nucleophile) is an active-site residue.

The protein belongs to the glycosyl hydrolase 5 (cellulase A) family.

Its subcellular location is the cell membrane. It carries out the reaction Successive hydrolysis of beta-D-glucose units from the non-reducing ends of (1-&gt;3)-beta-D-glucans, releasing alpha-glucose.. Functionally, glucosidase involved in the degradation of cellulosic biomass. Active on lichenan. In Aspergillus fumigatus (strain CBS 144.89 / FGSC A1163 / CEA10) (Neosartorya fumigata), this protein is Probable glucan 1,3-beta-glucosidase D (exgD).